Here is a 72-residue protein sequence, read N- to C-terminus: UPF0154 protein BLi02038/BL02936 (72 aa).

A helical transmembrane segment spans residues 4 to 24 (WVVILVGVLALLAGVALGFFI).

Belongs to the UPF0154 family.

It is found in the cell membrane. This chain is UPF0154 protein BLi02038/BL02936, found in Bacillus licheniformis (strain ATCC 14580 / DSM 13 / JCM 2505 / CCUG 7422 / NBRC 12200 / NCIMB 9375 / NCTC 10341 / NRRL NRS-1264 / Gibson 46).